A 295-amino-acid chain; its full sequence is Probable aspartoacylase (295 aa).

Zn(2+) is bound by residues histidine 16 and glutamate 19. Substrate is bound by residues arginine 58 and 65-66 (NR). Histidine 107 provides a ligand contact to Zn(2+). Substrate is bound by residues glutamate 166 and tyrosine 277.

It belongs to the AspA/AstE family. Aspartoacylase subfamily. Zn(2+) is required as a cofactor.

It carries out the reaction an N-acyl-L-aspartate + H2O = a carboxylate + L-aspartate. This Acaryochloris marina (strain MBIC 11017) protein is Probable aspartoacylase.